A 467-amino-acid polypeptide reads, in one-letter code: Sodium-dependent phosphate transport protein 1 (467 aa).

3 N-linked (GlcNAc...) asparagine glycosylation sites follow: Asn41, Asn49, and Asn58. Helical transmembrane passes span 81 to 101 (GIIL…VGYF), 119 to 139 (SVLS…VVVC), 178 to 198 (FLLG…SLGW), 200 to 220 (MVFY…FVLF), 257 to 277 (AILK…FFWS), 301 to 321 (GFLS…AGQL), 339 to 359 (LFTA…PYLS), 365 to 385 (IVIF…GVFI), 401 to 421 (CSTL…GLIL), and 433 to 453 (FILM…VATA).

The protein belongs to the major facilitator superfamily. Sodium/anion cotransporter family. In terms of assembly, interacts with PDZK1. Expressed in kidney cortex, liver and brain but not in other tissues.

The protein localises to the apical cell membrane. The catalysed reaction is 3 Na(+)(out) + phosphate(out) = 3 Na(+)(in) + phosphate(in). It catalyses the reaction urate(out) = urate(in). Functionally, important for the resorption of phosphate by the kidney. May be involved in actively transporting phosphate into cells via Na(+) cotransport in the renal brush border membrane. Plays a role in urate transport in the kidney. The protein is Sodium-dependent phosphate transport protein 1 (SLC17A1) of Homo sapiens (Human).